The primary structure comprises 211 residues: Thymidylate kinase (211 aa).

ATP is bound at residue 10-17 (GVEGCGKT).

Belongs to the thymidylate kinase family.

The catalysed reaction is dTMP + ATP = dTDP + ADP. Phosphorylation of dTMP to form dTDP in both de novo and salvage pathways of dTTP synthesis. The polypeptide is Thymidylate kinase (Nostoc sp. (strain PCC 7120 / SAG 25.82 / UTEX 2576)).